A 205-amino-acid polypeptide reads, in one-letter code: DUF724 domain-containing protein 4 (205 aa).

A disordered region spans residues 28-59 (DASGRGKRRRVEQEHHSDLNNETAAPTGGSAG). Positions 63-189 (VLPFTKTLAS…MADDYSKLKK (127 aa)) constitute a DUF724 domain.

Expressed in roots, leaves, stems, flowers and siliques.

It localises to the nucleus. In terms of biological role, may be involved in the polar growth of plant cells via transportation of RNAs. The protein is DUF724 domain-containing protein 4 of Arabidopsis thaliana (Mouse-ear cress).